A 368-amino-acid polypeptide reads, in one-letter code: tRNA-specific 2-thiouridylase MnmA (368 aa).

ATP-binding positions include 12 to 19 and methionine 38; that span reads AMSGGVDS. Cysteine 110 acts as the Nucleophile in catalysis. Cysteine 110 and cysteine 207 are disulfide-bonded. Glycine 134 is a binding site for ATP. The tract at residues 157–159 is interaction with tRNA; it reads KDQ. The active-site Cysteine persulfide intermediate is cysteine 207. Residues 312-313 form an interaction with tRNA region; it reads RY.

Belongs to the MnmA/TRMU family.

The protein localises to the cytoplasm. The enzyme catalyses S-sulfanyl-L-cysteinyl-[protein] + uridine(34) in tRNA + AH2 + ATP = 2-thiouridine(34) in tRNA + L-cysteinyl-[protein] + A + AMP + diphosphate + H(+). Catalyzes the 2-thiolation of uridine at the wobble position (U34) of tRNA, leading to the formation of s(2)U34. This chain is tRNA-specific 2-thiouridylase MnmA, found in Geobacter metallireducens (strain ATCC 53774 / DSM 7210 / GS-15).